The chain runs to 1394 residues: DNA-directed RNA polymerase subunit beta (1394 aa).

The protein belongs to the RNA polymerase beta chain family. As to quaternary structure, the RNAP catalytic core consists of 2 alpha, 1 beta, 1 beta' and 1 omega subunit. When a sigma factor is associated with the core the holoenzyme is formed, which can initiate transcription.

The enzyme catalyses RNA(n) + a ribonucleoside 5'-triphosphate = RNA(n+1) + diphosphate. Its function is as follows. DNA-dependent RNA polymerase catalyzes the transcription of DNA into RNA using the four ribonucleoside triphosphates as substrates. This Anaplasma phagocytophilum (Ehrlichia phagocytophila) protein is DNA-directed RNA polymerase subunit beta.